The following is a 795-amino-acid chain: Outer membrane protein assembly factor BamA (795 aa).

A signal peptide spans 1 to 19 (MKKLLIASLLFGTTTTVFA). 5 POTRA domains span residues 22–89 (FVAK…VVAK), 90–170 (SIIS…INED), 173–259 (AKLA…VNEG), 262–341 (YDLR…VDAG), and 344–418 (LTVR…VKER).

It belongs to the BamA family. In terms of assembly, part of the Bam complex.

The protein resides in the cell outer membrane. Its function is as follows. Part of the outer membrane protein assembly complex, which is involved in assembly and insertion of beta-barrel proteins into the outer membrane. This chain is Outer membrane protein assembly factor BamA, found in Haemophilus influenzae (strain ATCC 51907 / DSM 11121 / KW20 / Rd).